A 603-amino-acid chain; its full sequence is Ankyrin repeat and LEM domain-containing protein 2 homolog (603 aa).

A helical; Signal-anchor for type III membrane protein transmembrane segment spans residues 2–22 (GRKSAILAVILAIIYFRSNFS). 2 ANK repeats span residues 161-190 (FRYN…NIDF) and 221-250 (NSDT…TDRT). 2 disordered regions span residues 446-465 (ISEN…DDDD) and 505-538 (LPPP…PPPT). A compositionally biased stretch (acidic residues) spans 456 to 465 (DSADDEDDDD).

It belongs to the ANKLE2 family. As to quaternary structure, interacts with baf-1. Interacts with protein phosphatase 2A (PP2A) components.

It localises to the nucleus membrane. Functionally, involved in mitotic nuclear envelope reassembly by promoting dephosphorylation of baf-1 during mitotic exit. Coordinates the control of baf-1 dephosphorylation by inhibiting VRK1 kinase and promoting dephosphorylation of baf-1 by protein phosphatase 2A (PP2A), thereby facilitating nuclear envelope assembly. It is unclear whether it acts as a real PP2A regulatory subunit or whether it is involved in recruitment of the PP2A complex. The polypeptide is Ankyrin repeat and LEM domain-containing protein 2 homolog (lem-4) (Caenorhabditis elegans).